Here is a 175-residue protein sequence, read N- to C-terminus: Transcriptional repressor NrdR (175 aa).

A zinc finger spans residues 3–32 (CPYCSHPDTKVIDSRDVDDGVRRRRECVVC). Residues 47–137 (LFVVKKDQRR…VYREFTDITQ (91 aa)) enclose the ATP-cone domain.

The protein belongs to the NrdR family. The cofactor is Zn(2+).

In terms of biological role, negatively regulates transcription of bacterial ribonucleotide reductase nrd genes and operons by binding to NrdR-boxes. This is Transcriptional repressor NrdR from Dehalococcoides mccartyi (strain ATCC BAA-2266 / KCTC 15142 / 195) (Dehalococcoides ethenogenes (strain 195)).